The sequence spans 85 residues: Scratcher peptide (85 aa).

The signal sequence occupies residues 1–24 (MTSVQSVTCCCLLWLMLSVQPITP). The propeptide occupies 25 to 38 (GSPGPAQLSRERSF). E47 is subject to 4-carboxyglutamate. Residue D67 is modified to Aspartic acid 1-amide. A propeptide spanning residues 68–85 (KRDVVSPRIRRRKRSKAM) is cleaved from the precursor.

The protein belongs to the conotoxin J superfamily. Contains 2 disulfide bonds. In terms of tissue distribution, expressed by the venom duct.

Its subcellular location is the secreted. Its function is as follows. Causes scratching in mice. The protein is Scratcher peptide of Conus geographus (Geography cone).